Here is a 237-residue protein sequence, read N- to C-terminus: 1-(5-phosphoribosyl)-5-[(5-phosphoribosylamino)methylideneamino] imidazole-4-carboxamide isomerase (237 aa).

Residue Asp-8 is the Proton acceptor of the active site. Asp-129 acts as the Proton donor in catalysis.

Belongs to the HisA/HisF family.

It is found in the cytoplasm. The enzyme catalyses 1-(5-phospho-beta-D-ribosyl)-5-[(5-phospho-beta-D-ribosylamino)methylideneamino]imidazole-4-carboxamide = 5-[(5-phospho-1-deoxy-D-ribulos-1-ylimino)methylamino]-1-(5-phospho-beta-D-ribosyl)imidazole-4-carboxamide. Its pathway is amino-acid biosynthesis; L-histidine biosynthesis; L-histidine from 5-phospho-alpha-D-ribose 1-diphosphate: step 4/9. This Dehalococcoides mccartyi (strain ATCC BAA-2266 / KCTC 15142 / 195) (Dehalococcoides ethenogenes (strain 195)) protein is 1-(5-phosphoribosyl)-5-[(5-phosphoribosylamino)methylideneamino] imidazole-4-carboxamide isomerase.